The sequence spans 289 residues: Ribosomal RNA small subunit methyltransferase A (289 aa).

Asparagine 21, leucine 23, glycine 48, glutamate 69, aspartate 94, and asparagine 120 together coordinate S-adenosyl-L-methionine.

The protein belongs to the class I-like SAM-binding methyltransferase superfamily. rRNA adenine N(6)-methyltransferase family. RsmA subfamily.

It localises to the cytoplasm. The enzyme catalyses adenosine(1518)/adenosine(1519) in 16S rRNA + 4 S-adenosyl-L-methionine = N(6)-dimethyladenosine(1518)/N(6)-dimethyladenosine(1519) in 16S rRNA + 4 S-adenosyl-L-homocysteine + 4 H(+). Functionally, specifically dimethylates two adjacent adenosines (A1518 and A1519) in the loop of a conserved hairpin near the 3'-end of 16S rRNA in the 30S particle. May play a critical role in biogenesis of 30S subunits. The chain is Ribosomal RNA small subunit methyltransferase A from Actinobacillus pleuropneumoniae serotype 5b (strain L20).